A 130-amino-acid chain; its full sequence is MSMQDPIADMLTRIRNGQAANKAAVTMPSSKLKVAIANVLKEEGFIEDFKVEGDTKPELELTLKYFQGKAVVESIQRVSRPGLRIYKKKDELPKVMAGLGIAVVSTSKGVMTDRAARQAGLGGEIICYVA.

The protein belongs to the universal ribosomal protein uS8 family. As to quaternary structure, part of the 30S ribosomal subunit. Contacts proteins S5 and S12.

In terms of biological role, one of the primary rRNA binding proteins, it binds directly to 16S rRNA central domain where it helps coordinate assembly of the platform of the 30S subunit. This chain is Small ribosomal subunit protein uS8, found in Klebsiella pneumoniae subsp. pneumoniae (strain ATCC 700721 / MGH 78578).